Here is a 204-residue protein sequence, read N- to C-terminus: Large ribosomal subunit protein eL15 (204 aa).

The protein belongs to the eukaryotic ribosomal protein eL15 family. In terms of assembly, component of the large ribosomal subunit.

It is found in the cytoplasm. Functionally, component of the large ribosomal subunit. The ribosome is a large ribonucleoprotein complex responsible for the synthesis of proteins in the cell. The sequence is that of Large ribosomal subunit protein eL15 (rpl15) from Hypophthalmichthys nobilis (Bighead carp).